We begin with the raw amino-acid sequence, 380 residues long: MTRSGHPVTLDDLPLRADLRGKAPYGAPQLAVPVRLNTNENPHPPTRALVDDVVRSVREAAIDLHRYPDRDAVALRADLAGYLTAQTGIQLGVENIWAANGSNEILQQLLQAFGGPGRSAIGFVPSYSMHPIISDGTHTEWIEASRANDFGLDVDVAVAAVVDRKPDVVFIASPNNPSGQSVSLPDLCKLLDVAPGIAIVDEAYGEFSSQPSAVSLVEEYPSKLVVTRTMSKAFAFAGGRLGYLIATPAVIDAMLLVRLPYHLSSVTQAAARAALRHSDDTLSSVAALIAERERVTTSLNDMGFRVIPSDANFVLFGEFADAPAAWRRYLEAGILIRDVGIPGYLRATTGLAEENDAFLRASARIATDLVPVTRSPVGAP.

Lys232 bears the N6-(pyridoxal phosphate)lysine mark.

It belongs to the class-II pyridoxal-phosphate-dependent aminotransferase family. Histidinol-phosphate aminotransferase subfamily. Homodimer. Pyridoxal 5'-phosphate is required as a cofactor.

It carries out the reaction L-histidinol phosphate + 2-oxoglutarate = 3-(imidazol-4-yl)-2-oxopropyl phosphate + L-glutamate. It participates in amino-acid biosynthesis; L-histidine biosynthesis; L-histidine from 5-phospho-alpha-D-ribose 1-diphosphate: step 7/9. In Mycobacterium bovis (strain BCG / Pasteur 1173P2), this protein is Histidinol-phosphate aminotransferase.